The primary structure comprises 83 residues: Putative defensin-like protein 67 (83 aa).

Positions 1 to 24 (MGSSKLMVTCIVVAMLTISCDILS) are cleaved as a signal peptide. 4 disulfides stabilise this stretch: Cys-38/Cys-82, Cys-42/Cys-65, Cys-51/Cys-80, and Cys-55/Cys-81.

The protein belongs to the DEFL family.

It localises to the secreted. The chain is Putative defensin-like protein 67 from Arabidopsis thaliana (Mouse-ear cress).